The primary structure comprises 1406 residues: DNA-directed RNA polymerase subunit beta' (1406 aa).

The Zn(2+) site is built by Cys-70, Cys-72, Cys-85, and Cys-88. Asp-460, Asp-462, and Asp-464 together coordinate Mg(2+). Positions 814, 888, 895, and 898 each coordinate Zn(2+).

The protein belongs to the RNA polymerase beta' chain family. As to quaternary structure, the RNAP catalytic core consists of 2 alpha, 1 beta, 1 beta' and 1 omega subunit. When a sigma factor is associated with the core the holoenzyme is formed, which can initiate transcription. The cofactor is Mg(2+). It depends on Zn(2+) as a cofactor.

The enzyme catalyses RNA(n) + a ribonucleoside 5'-triphosphate = RNA(n+1) + diphosphate. Its function is as follows. DNA-dependent RNA polymerase catalyzes the transcription of DNA into RNA using the four ribonucleoside triphosphates as substrates. This chain is DNA-directed RNA polymerase subunit beta', found in Sodalis glossinidius (strain morsitans).